We begin with the raw amino-acid sequence, 592 residues long: Aspartate--tRNA(Asp/Asn) ligase (592 aa).

Position 175 (Glu175) interacts with L-aspartate. Residues 199-202 (QQFK) form an aspartate region. Positions 221 and 451 each coordinate L-aspartate. Residue 221–223 (RDE) coordinates ATP. Glu485 provides a ligand contact to ATP. Arg492 lines the L-aspartate pocket. 537–540 (GIDR) contributes to the ATP binding site.

It belongs to the class-II aminoacyl-tRNA synthetase family. Type 1 subfamily. As to quaternary structure, homodimer.

Its subcellular location is the cytoplasm. The catalysed reaction is tRNA(Asx) + L-aspartate + ATP = L-aspartyl-tRNA(Asx) + AMP + diphosphate. Aspartyl-tRNA synthetase with relaxed tRNA specificity since it is able to aspartylate not only its cognate tRNA(Asp) but also tRNA(Asn). Reaction proceeds in two steps: L-aspartate is first activated by ATP to form Asp-AMP and then transferred to the acceptor end of tRNA(Asp/Asn). This chain is Aspartate--tRNA(Asp/Asn) ligase, found in Phenylobacterium zucineum (strain HLK1).